The primary structure comprises 94 residues: Small ribosomal subunit protein bS18 (94 aa).

The segment covering 1-12 has biased composition (low complexity); it reads MSEQNSRPQNSE. The segment at 1 to 29 is disordered; it reads MSEQNSRPQNSERPQRSRRPQGGPRRRRK. A compositionally biased stretch (basic residues) spans 16-29; it reads RSRRPQGGPRRRRK.

This sequence belongs to the bacterial ribosomal protein bS18 family. As to quaternary structure, part of the 30S ribosomal subunit. Forms a tight heterodimer with protein bS6.

Binds as a heterodimer with protein bS6 to the central domain of the 16S rRNA, where it helps stabilize the platform of the 30S subunit. The sequence is that of Small ribosomal subunit protein bS18 from Leuconostoc mesenteroides subsp. mesenteroides (strain ATCC 8293 / DSM 20343 / BCRC 11652 / CCM 1803 / JCM 6124 / NCDO 523 / NBRC 100496 / NCIMB 8023 / NCTC 12954 / NRRL B-1118 / 37Y).